The chain runs to 212 residues: uncharacterized protein (212 aa).

Positions 53, 74, and 97 each coordinate S-adenosyl-L-methionine.

Belongs to the methyltransferase superfamily. YrrT family.

Functionally, could be a S-adenosyl-L-methionine-dependent methyltransferase. This is an uncharacterized protein from Bacillus cereus (strain ZK / E33L).